The following is a 665-amino-acid chain: DNA ligase (665 aa).

NAD(+) is bound by residues 31–35 (DEEFD), 80–81 (SL), and Glu111. The active-site N6-AMP-lysine intermediate is Lys113. Residues Arg134, Glu171, Lys287, and Lys311 each coordinate NAD(+). Positions 405, 408, 423, and 429 each coordinate Zn(2+). The BRCT domain maps to 588 to 665 (FTNHAFQGKI…NEKEFISLCH (78 aa)).

The protein belongs to the NAD-dependent DNA ligase family. LigA subfamily. Requires Mg(2+) as cofactor. It depends on Mn(2+) as a cofactor.

The enzyme catalyses NAD(+) + (deoxyribonucleotide)n-3'-hydroxyl + 5'-phospho-(deoxyribonucleotide)m = (deoxyribonucleotide)n+m + AMP + beta-nicotinamide D-nucleotide.. DNA ligase that catalyzes the formation of phosphodiester linkages between 5'-phosphoryl and 3'-hydroxyl groups in double-stranded DNA using NAD as a coenzyme and as the energy source for the reaction. It is essential for DNA replication and repair of damaged DNA. This chain is DNA ligase, found in Protochlamydia amoebophila (strain UWE25).